We begin with the raw amino-acid sequence, 209 residues long: Molybdenum cofactor guanylyltransferase (209 aa).

Residues 16–18 (LAG), Lys28, Asn56, Asp69, and Asp103 contribute to the GTP site. Residue Asp103 participates in Mg(2+) binding.

The protein belongs to the MobA family. As to quaternary structure, monomer. The cofactor is Mg(2+).

The protein resides in the cytoplasm. The enzyme catalyses Mo-molybdopterin + GTP + H(+) = Mo-molybdopterin guanine dinucleotide + diphosphate. Transfers a GMP moiety from GTP to Mo-molybdopterin (Mo-MPT) cofactor (Moco or molybdenum cofactor) to form Mo-molybdopterin guanine dinucleotide (Mo-MGD) cofactor. This Rhizobium johnstonii (strain DSM 114642 / LMG 32736 / 3841) (Rhizobium leguminosarum bv. viciae) protein is Molybdenum cofactor guanylyltransferase.